The following is a 341-amino-acid chain: Phenylalanine--tRNA ligase alpha subunit (341 aa).

Residue E259 coordinates Mg(2+).

It belongs to the class-II aminoacyl-tRNA synthetase family. Phe-tRNA synthetase alpha subunit type 1 subfamily. As to quaternary structure, tetramer of two alpha and two beta subunits. The cofactor is Mg(2+).

The protein localises to the cytoplasm. It carries out the reaction tRNA(Phe) + L-phenylalanine + ATP = L-phenylalanyl-tRNA(Phe) + AMP + diphosphate + H(+). The polypeptide is Phenylalanine--tRNA ligase alpha subunit (Mycobacterium tuberculosis (strain ATCC 25177 / H37Ra)).